A 116-amino-acid polypeptide reads, in one-letter code: Large ribosomal subunit protein bL20 (116 aa).

Belongs to the bacterial ribosomal protein bL20 family.

Functionally, binds directly to 23S ribosomal RNA and is necessary for the in vitro assembly process of the 50S ribosomal subunit. It is not involved in the protein synthesizing functions of that subunit. This Picosynechococcus sp. (strain ATCC 27264 / PCC 7002 / PR-6) (Agmenellum quadruplicatum) protein is Large ribosomal subunit protein bL20.